We begin with the raw amino-acid sequence, 220 residues long: Adapter protein MecA (220 aa).

It belongs to the MecA family. Homodimer.

In terms of biological role, enables the recognition and targeting of unfolded and aggregated proteins to the ClpC protease or to other proteins involved in proteolysis. This chain is Adapter protein MecA, found in Macrococcus caseolyticus (strain JCSC5402) (Macrococcoides caseolyticum).